Consider the following 185-residue polypeptide: Large ribosomal subunit protein uL5 (185 aa).

Belongs to the universal ribosomal protein uL5 family. As to quaternary structure, part of the 50S ribosomal subunit; part of the 5S rRNA/L5/L18/L25 subcomplex. Contacts the 5S rRNA and the P site tRNA. Forms a bridge to the 30S subunit in the 70S ribosome.

Its function is as follows. This is one of the proteins that bind and probably mediate the attachment of the 5S RNA into the large ribosomal subunit, where it forms part of the central protuberance. In the 70S ribosome it contacts protein S13 of the 30S subunit (bridge B1b), connecting the 2 subunits; this bridge is implicated in subunit movement. Contacts the P site tRNA; the 5S rRNA and some of its associated proteins might help stabilize positioning of ribosome-bound tRNAs. This Rhodopseudomonas palustris (strain BisA53) protein is Large ribosomal subunit protein uL5.